We begin with the raw amino-acid sequence, 735 residues long: Phosphoribosylformylglycinamidine synthase subunit PurL (735 aa).

Residue His-49 is part of the active site. Residues Tyr-52 and Lys-91 each coordinate ATP. Residue Glu-93 coordinates Mg(2+). Substrate is bound by residues 94-97 (SHNH) and Arg-116. His-95 functions as the Proton acceptor in the catalytic mechanism. Asp-117 is a Mg(2+) binding site. Residue Gln-240 participates in substrate binding. Asp-268 provides a ligand contact to Mg(2+). 312 to 314 (ESQ) is a binding site for substrate. ATP is bound by residues Asp-493 and Gly-530. Residue Asn-531 coordinates Mg(2+). Ser-533 serves as a coordination point for substrate.

The protein belongs to the FGAMS family. As to quaternary structure, monomer. Part of the FGAM synthase complex composed of 1 PurL, 1 PurQ and 2 PurS subunits.

Its subcellular location is the cytoplasm. The catalysed reaction is N(2)-formyl-N(1)-(5-phospho-beta-D-ribosyl)glycinamide + L-glutamine + ATP + H2O = 2-formamido-N(1)-(5-O-phospho-beta-D-ribosyl)acetamidine + L-glutamate + ADP + phosphate + H(+). It functions in the pathway purine metabolism; IMP biosynthesis via de novo pathway; 5-amino-1-(5-phospho-D-ribosyl)imidazole from N(2)-formyl-N(1)-(5-phospho-D-ribosyl)glycinamide: step 1/2. Part of the phosphoribosylformylglycinamidine synthase complex involved in the purines biosynthetic pathway. Catalyzes the ATP-dependent conversion of formylglycinamide ribonucleotide (FGAR) and glutamine to yield formylglycinamidine ribonucleotide (FGAM) and glutamate. The FGAM synthase complex is composed of three subunits. PurQ produces an ammonia molecule by converting glutamine to glutamate. PurL transfers the ammonia molecule to FGAR to form FGAM in an ATP-dependent manner. PurS interacts with PurQ and PurL and is thought to assist in the transfer of the ammonia molecule from PurQ to PurL. The polypeptide is Phosphoribosylformylglycinamidine synthase subunit PurL (Methylocella silvestris (strain DSM 15510 / CIP 108128 / LMG 27833 / NCIMB 13906 / BL2)).